A 261-amino-acid polypeptide reads, in one-letter code: MNLAVIGHPIAHSLSPQLHEQWLRASGLFGRYEAIDATPDQLPALFAAMREGDWDGFNVTIPYKEVVVRYLDDLDEAAKHAGAVNTVYKRDGRLIGTNTDGAGLVQALMPYTDFRGHVLIVGAGGAARGIVQALPTRDVTIVNRTVERAKALADTFGVVYTTFDEMDVSRYDVIIQTTSVGMDERSTPLSLEGLRQNTVVCDIIYRPLVTPMLQEAKSRGANIVTGVAMFVGQGALSFEKWTGVKPDETVGKKLIEGLLEE.

Shikimate is bound by residues 13–15 and threonine 60; that span reads SLS. Catalysis depends on lysine 64, which acts as the Proton acceptor. Glutamate 76 serves as a coordination point for NADP(+). Shikimate contacts are provided by asparagine 85 and aspartate 100. NADP(+) contacts are provided by residues 122 to 126, 143 to 148, and isoleucine 203; these read GAGGA and NRTVER. Tyrosine 205 is a binding site for shikimate. NADP(+) is bound at residue glycine 226.

Belongs to the shikimate dehydrogenase family. In terms of assembly, homodimer.

It carries out the reaction shikimate + NADP(+) = 3-dehydroshikimate + NADPH + H(+). It functions in the pathway metabolic intermediate biosynthesis; chorismate biosynthesis; chorismate from D-erythrose 4-phosphate and phosphoenolpyruvate: step 4/7. In terms of biological role, involved in the biosynthesis of the chorismate, which leads to the biosynthesis of aromatic amino acids. Catalyzes the reversible NADPH linked reduction of 3-dehydroshikimate (DHSA) to yield shikimate (SA). This is Shikimate dehydrogenase (NADP(+)) from Exiguobacterium sp. (strain ATCC BAA-1283 / AT1b).